Here is a 233-residue protein sequence, read N- to C-terminus: Synaptogyrin-4 (233 aa).

In terms of domain architecture, MARVEL spans 18 to 169 (FLRRPKSISR…QAYLAFQDLR (152 aa)). 4 helical membrane passes run 25–45 (ISRI…LTDG), 66–86 (CSFA…FLAI), 104–124 (LLDF…FCFL), and 145–165 (AAIA…YLAF). A disordered region spans residues 191–233 (SPSSTSPSNPPITGPNSLSYTSSALSPYMTTPKAPRLAMMPDS). Residues 204-219 (GPNSLSYTSSALSPYM) show a composition bias toward polar residues.

This sequence belongs to the synaptogyrin family.

It is found in the membrane. This chain is Synaptogyrin-4 (Syngr4), found in Mus musculus (Mouse).